The sequence spans 356 residues: 5-amino-6-(D-ribitylamino)uracil--L-tyrosine 4-hydroxyphenyl transferase (356 aa).

A Radical SAM core domain is found at 47–281; sequence VTYIVNRNIN…AIARILLNTH (235 aa). [4Fe-4S] cluster contacts are provided by Cys61, Cys65, and Cys68.

It belongs to the radical SAM superfamily. CofH family. In terms of assembly, consists of two subunits, CofG and CofH. Requires [4Fe-4S] cluster as cofactor.

The catalysed reaction is 5-amino-6-(D-ribitylamino)uracil + L-tyrosine + S-adenosyl-L-methionine = 5-amino-5-(4-hydroxybenzyl)-6-(D-ribitylimino)-5,6-dihydrouracil + 2-iminoacetate + 5'-deoxyadenosine + L-methionine + H(+). The protein operates within cofactor biosynthesis; coenzyme F0 biosynthesis. Its function is as follows. Catalyzes the radical-mediated synthesis of 5-amino-5-(4-hydroxybenzyl)-6-(D-ribitylimino)-5,6-dihydrouracil from 5-amino-6-(D-ribitylamino)uracil and L-tyrosine. The sequence is that of 5-amino-6-(D-ribitylamino)uracil--L-tyrosine 4-hydroxyphenyl transferase from Methanococcoides burtonii (strain DSM 6242 / NBRC 107633 / OCM 468 / ACE-M).